The following is a 622-amino-acid chain: Apical membrane antigen 1 (622 aa).

The N-terminal stretch at Met-1–Gly-24 is a signal peptide. Residues Gln-25–Lys-546 lie on the Extracellular side of the membrane. 5 cysteine pairs are disulfide-bonded: Cys-149–Cys-302, Cys-217–Cys-247, Cys-263–Cys-275, Cys-320–Cys-418, and Cys-337–Cys-409. Asn-162 is a glycosylation site (N-linked (GlcNAc...) asparagine). Residues Asn-286, Asn-371, Asn-421, Asn-422, and Asn-499 are each glycosylated (N-linked (GlcNAc...) asparagine). Intrachain disulfides connect Cys-443-Cys-502, Cys-490-Cys-507, and Cys-492-Cys-509. The helical transmembrane segment at Ile-547–Tyr-567 threads the bilayer. Topologically, residues Lys-568–Tyr-622 are cytoplasmic. Basic and acidic residues predominate over residues Lys-578–Glu-594. The segment at Lys-578–Lys-607 is disordered.

Belongs to the apicomplexan parasites AMA1 family.

Its subcellular location is the membrane. In terms of biological role, involved in parasite invasion of erythrocytes. The protein is Apical membrane antigen 1 (AMA-1) of Plasmodium falciparum (isolate FC27 / Papua New Guinea).